A 472-amino-acid chain; its full sequence is Adenosylhomocysteinase (472 aa).

Residues Thr-61, Asp-136, and Glu-196 each coordinate substrate. Position 197 to 199 (197 to 199 (TTT)) interacts with NAD(+). Substrate is bound by residues Lys-226 and Asp-230. NAD(+) is bound by residues Asn-231, 260–265 (GYGDVG), Glu-283, Asn-318, 339–341 (IGH), and Asn-384.

Belongs to the adenosylhomocysteinase family. NAD(+) serves as cofactor.

It localises to the cytoplasm. The catalysed reaction is S-adenosyl-L-homocysteine + H2O = L-homocysteine + adenosine. It functions in the pathway amino-acid biosynthesis; L-homocysteine biosynthesis; L-homocysteine from S-adenosyl-L-homocysteine: step 1/1. Functionally, may play a key role in the regulation of the intracellular concentration of adenosylhomocysteine. This Cupriavidus metallidurans (strain ATCC 43123 / DSM 2839 / NBRC 102507 / CH34) (Ralstonia metallidurans) protein is Adenosylhomocysteinase.